Reading from the N-terminus, the 252-residue chain is MSRKPIIAGNWKMNKNPQEAKAFVEAVASKLPSTDLVDVAVAAPAVDLVTTIESAKDSVLKVAAQNCYFENTGAFTGETSPKVLAEMGADYVVIGHSERRDYFHETDEDINKKAKAIFANGLTPIVCCGESLETYEAGKAVEFVGAQVSAALAGLSAEQVASLVLAYEPIWAIGTGKSATQDDAQNMCKAVRDVVAADFGQEVADKVRVQYGGSVKPENVKDYMACPDVDGALVGGASLEADSFLALLDFLN.

10 to 12 (NWK) is a substrate binding site. The Electrophile role is filled by H96. Residue E168 is the Proton acceptor of the active site. Residues G174, S214, and 235–236 (GG) each bind substrate.

Belongs to the triosephosphate isomerase family. As to quaternary structure, homodimer.

Its subcellular location is the cytoplasm. The enzyme catalyses D-glyceraldehyde 3-phosphate = dihydroxyacetone phosphate. It functions in the pathway carbohydrate biosynthesis; gluconeogenesis. It participates in carbohydrate degradation; glycolysis; D-glyceraldehyde 3-phosphate from glycerone phosphate: step 1/1. Functionally, involved in the gluconeogenesis. Catalyzes stereospecifically the conversion of dihydroxyacetone phosphate (DHAP) to D-glyceraldehyde-3-phosphate (G3P). This Streptococcus pyogenes serotype M2 (strain MGAS10270) protein is Triosephosphate isomerase.